Consider the following 304-residue polypeptide: Myelin basic protein (304 aa).

Basic and acidic residues-rich tracts occupy residues 1–12 (MGNHAGKRELNA) and 22–32 (NRGESEKKRNL). The tract at residues 1–146 (MGNHAGKREL…QKRPSQRHGS (146 aa)) is disordered. Position 2 is an N-acetylalanine (G2). Positions 51-65 (ANQNNGTSSQDTAVT) are enriched in polar residues. Residues 95 to 113 (FSRDAPGREDNTFKDRPSE) are compositionally biased toward basic and acidic residues. S96 carries the post-translational modification Phosphoserine. Over residues 117–130 (LQTIQEDSAATSES) the composition is skewed to polar residues. Residues S141 and S146 each carry the phosphoserine modification. Y148 bears the Phosphotyrosine mark. Residue T151 is modified to Phosphothreonine. S153 is modified (phosphoserine). T154 carries the post-translational modification Phosphothreonine. Citrulline; in form C8 is present on residues R159 and R165. At R167 the chain carries Citrulline. T169 bears the Phosphothreonine mark. The residue at position 174 (S174) is a Phosphoserine. Omega-N-methylarginine is present on residues R177 and R183. Residues 179–222 (FGGDRGAPKRGSGKDSHHPARTAHYGSLPQKSHGRTQDENPVVH) form an induces experimental autoimmune encephalomyelitis (EAE) 1 region. A disordered region spans residues 180–249 (GGDRGAPKRG…GRGLSLSRFS (70 aa)). S190 carries the phosphoserine modification. R199 carries the citrulline modification. Y203 carries the phosphotyrosine modification. Phosphoserine is present on S210. Residues T214 and T229 each carry the phosphothreonine modification. At R231 the chain carries Citrulline. Position 232 is a phosphothreonine (T232). Residue Q237 is modified to Deamidated glutamine. R241 carries the post-translational modification Omega-N-methylarginine; alternate. R241 is subject to Symmetric dimethylarginine; alternate. The segment at 246–256 (SRFSWGAEGQR) is induces experimental autoimmune encephalomyelitis (EAE) 2. A Phosphoserine modification is found at S249. A citrulline; in form C8 mark is found at R256 and R264. Residue Q281 is modified to Deamidated glutamine. R293 carries the citrulline; in form C8 modification. Phosphoserine is present on S295. Position 296 is a citrulline (R296). S299 carries the post-translational modification Phosphoserine; by UHMK1. A Citrulline modification is found at R303. Residue R304 is modified to Citrulline; in form C8.

The protein belongs to the myelin basic protein family. Homodimer. Isoform 3 exists as a homodimer. Post-translationally, several charge isomers of MBP; C1 (the most cationic, least modified, and most abundant form), C2, C3, C4, C5, C6, C7, C8-A and C8-B (the least cationic form); are produced as a result of optional PTM, such as phosphorylation, deamidation of glutamine or asparagine, arginine citrullination and methylation. C8-A and C8-B contain each two mass isoforms termed C8-A(H), C8-A(L), C8-B(H) and C8-B(L), (H) standing for higher and (L) for lower molecular weight. C3, C4 and C5 are phosphorylated. The ratio of methylated arginine residues decreases during aging, making the protein more cationic. The N-terminal alanine is acetylated (isoform 3, isoform 4, isoform 5 and isoform 6). In terms of processing, arg-241 was found to be 6% monomethylated and 60% symmetrically dimethylated. Post-translationally, proteolytically cleaved in B cell lysosomes by cathepsin CTSG which degrades the major immunogenic MBP epitope and prevents the activation of MBP-specific autoreactive T cells. Phosphorylated by TAOK2, VRK2, MAPK11, MAPK12, MAPK14 and MINK1. MBP isoforms are found in both the central and the peripheral nervous system, whereas Golli-MBP isoforms are expressed in fetal thymus, spleen and spinal cord, as well as in cell lines derived from the immune system.

It is found in the myelin membrane. The protein localises to the nucleus. The classic group of MBP isoforms (isoform 4-isoform 14) are with PLP the most abundant protein components of the myelin membrane in the CNS. They have a role in both its formation and stabilization. The smaller isoforms might have an important role in remyelination of denuded axons in multiple sclerosis. The non-classic group of MBP isoforms (isoform 1-isoform 3/Golli-MBPs) may preferentially have a role in the early developing brain long before myelination, maybe as components of transcriptional complexes, and may also be involved in signaling pathways in T-cells and neural cells. Differential splicing events combined with optional post-translational modifications give a wide spectrum of isomers, with each of them potentially having a specialized function. Induces T-cell proliferation. In Homo sapiens (Human), this protein is Myelin basic protein (MBP).